The sequence spans 433 residues: Histone acetyltransferase type B subunit 2 (433 aa).

WD repeat units follow at residues 131–171 (EHPG…LDPT), 184–224 (GHEA…ADSR), 234–274 (HHTQ…TNKA), 281–321 (GHLD…EKVH), and 325–365 (GHND…EEQL). The tract at residues 367 to 371 (DDQDD) is interaction with the histone H4 N-terminus. The WD 6 repeat unit spans residues 382-422 (GHTNHLADFSWNPNEPWLVASAAEDNLLQIWKVAESIVGKD).

Belongs to the WD repeat RBAP46/RBAP48/MSI1 family. As to quaternary structure, component of the HAT-B complex composed of at least HAT1 and HAT2. The HAT-B complex binds to histone H4 tail.

The protein localises to the cytoplasm. Its subcellular location is the nucleus. Functionally, regulatory subunit of the histone acetylase B (HAT-B) complex. The complex acetylates 'Lys-12' of histone H4 which is required for telomeric silencing. The polypeptide is Histone acetyltransferase type B subunit 2 (HAT2) (Gibberella zeae (strain ATCC MYA-4620 / CBS 123657 / FGSC 9075 / NRRL 31084 / PH-1) (Wheat head blight fungus)).